The primary structure comprises 111 residues: Flagellar hook-basal body complex protein FliE (111 aa).

The protein belongs to the FliE family.

The protein resides in the bacterial flagellum basal body. This chain is Flagellar hook-basal body complex protein FliE, found in Brucella abortus (strain S19).